A 149-amino-acid chain; its full sequence is Transcriptional repressor NrdR (149 aa).

The segment at 3–34 (CPFCSATDTKVIDSRLVADGHQVRRRRECTEC) is a zinc-finger region. In terms of domain architecture, ATP-cone spans 49–139 (PRVIKRDGTR…VYRAFEDVSQ (91 aa)).

The protein belongs to the NrdR family. Zn(2+) serves as cofactor.

Its function is as follows. Negatively regulates transcription of bacterial ribonucleotide reductase nrd genes and operons by binding to NrdR-boxes. This Shewanella frigidimarina (strain NCIMB 400) protein is Transcriptional repressor NrdR.